A 153-amino-acid polypeptide reads, in one-letter code: Ribosomal RNA large subunit methyltransferase H (153 aa).

S-adenosyl-L-methionine contacts are provided by residues L75, G102, and 121–126 (LSKLTL).

It belongs to the RNA methyltransferase RlmH family. As to quaternary structure, homodimer.

It is found in the cytoplasm. It catalyses the reaction pseudouridine(1915) in 23S rRNA + S-adenosyl-L-methionine = N(3)-methylpseudouridine(1915) in 23S rRNA + S-adenosyl-L-homocysteine + H(+). Functionally, specifically methylates the pseudouridine at position 1915 (m3Psi1915) in 23S rRNA. This Campylobacter jejuni (strain RM1221) protein is Ribosomal RNA large subunit methyltransferase H.